Consider the following 126-residue polypeptide: Adrenocorticotropic hormone receptor (126 aa).

The chain crosses the membrane as a helical span at residues 1-25 (VLPEEIFFTISIVGVLENLIVLLAV). Topologically, residues 26–34 (FKNKNLQAP) are cytoplasmic. Residues 35-55 (MYFFICSLAISDMLGSLYKIL) traverse the membrane as a helical segment. Residues 56–80 (ENILIILRNMGYLKPRGSFETTADD) are Extracellular-facing. A helical transmembrane segment spans residues 81–102 (IIDSLFVLSLLGAIFSLSVIAA). Residues 103-123 (DRYITIFHALRYHSIVTMRRT) lie on the Cytoplasmic side of the membrane. The helical transmembrane segment at 124 to 126 (VVV) threads the bilayer.

Belongs to the G-protein coupled receptor 1 family. As to quaternary structure, interacts with MRAP; increasing ligand-sensitivity and generation of cAMP. Interacts with MRAP2; competing with MRAP for binding to MC2R and impairing the binding of corticotropin (ACTH).

The protein localises to the cell membrane. Its function is as follows. Receptor for corticotropin (ACTH). This receptor is mediated by G proteins (G(s)) which activate adenylate cyclase (cAMP). In Papio hamadryas (Hamadryas baboon), this protein is Adrenocorticotropic hormone receptor (MC2R).